Consider the following 74-residue polypeptide: Protein krueppel (74 aa).

4 C2H2-type zinc fingers span residues 1–4 (ERTH), 10–32 (FECQ…MRLH), 38–60 (YRCE…LRVH), and 66–74 (YGCEHCSMK).

It belongs to the krueppel C2H2-type zinc-finger protein family.

The protein resides in the nucleus. Krueppel is a gap class segmentation protein. The polypeptide is Protein krueppel (Kr) (Tribolium castaneum (Red flour beetle)).